Reading from the N-terminus, the 242-residue chain is Proteasome subunit alpha (242 aa).

The protein belongs to the peptidase T1A family. The 20S proteasome core is composed of 14 alpha and 14 beta subunits that assemble into four stacked heptameric rings, resulting in a barrel-shaped structure. The two inner rings, each composed of seven catalytic beta subunits, are sandwiched by two outer rings, each composed of seven alpha subunits. The catalytic chamber with the active sites is on the inside of the barrel. Has a gated structure, the ends of the cylinder being occluded by the N-termini of the alpha-subunits. Is capped at one or both ends by the proteasome regulatory ATPase, PAN.

It is found in the cytoplasm. Its activity is regulated as follows. The formation of the proteasomal ATPase PAN-20S proteasome complex, via the docking of the C-termini of PAN into the intersubunit pockets in the alpha-rings, triggers opening of the gate for substrate entry. Interconversion between the open-gate and close-gate conformations leads to a dynamic regulation of the 20S proteasome proteolysis activity. Functionally, component of the proteasome core, a large protease complex with broad specificity involved in protein degradation. The protein is Proteasome subunit alpha of Sulfolobus acidocaldarius (strain ATCC 33909 / DSM 639 / JCM 8929 / NBRC 15157 / NCIMB 11770).